The following is a 71-amino-acid chain: Large ribosomal subunit protein bL31 (71 aa).

Residues Cys-16, Cys-18, Cys-37, and Cys-40 each coordinate Zn(2+).

It belongs to the bacterial ribosomal protein bL31 family. Type A subfamily. Part of the 50S ribosomal subunit. Zn(2+) is required as a cofactor.

Its function is as follows. Binds the 23S rRNA. The sequence is that of Large ribosomal subunit protein bL31 from Marinomonas sp. (strain MWYL1).